Consider the following 481-residue polypeptide: NADH-quinone oxidoreductase subunit N (481 aa).

13 helical membrane passes run 9–29 (MLPE…GIVV), 39–59 (AVSM…DHVA), 76–96 (CISR…FLCA), 104–124 (FSVV…AGHF), 158–178 (FFIL…LVYG), 205–225 (AFVL…MWAV), 232–252 (PMAA…LLLA), 265–285 (ILYG…LGAL), 293–313 (LLAY…VLHG), 318–338 (AIFH…SVLL), 359–379 (FVAF…PFLG), 399–419 (VAFP…FYCF), and 443–463 (LGLT…LFLA).

Belongs to the complex I subunit 2 family. NDH-1 is composed of 14 different subunits. Subunits NuoA, H, J, K, L, M, N constitute the membrane sector of the complex.

The protein localises to the cell inner membrane. It carries out the reaction a quinone + NADH + 5 H(+)(in) = a quinol + NAD(+) + 4 H(+)(out). NDH-1 shuttles electrons from NADH, via FMN and iron-sulfur (Fe-S) centers, to quinones in the respiratory chain. The immediate electron acceptor for the enzyme in this species is believed to be ubiquinone. Couples the redox reaction to proton translocation (for every two electrons transferred, four hydrogen ions are translocated across the cytoplasmic membrane), and thus conserves the redox energy in a proton gradient. The polypeptide is NADH-quinone oxidoreductase subunit N (Anaplasma marginale (strain Florida)).